Reading from the N-terminus, the 413-residue chain is Multidrug resistance protein MdtA (413 aa).

The N-terminal stretch at 1–25 (MKNKRRTYFFQFAVLAVVIATAYFA) is a signal peptide. The segment at 394–413 (ANTYDQMDKSKPSNSKVENT) is disordered.

It belongs to the membrane fusion protein (MFP) (TC 8.A.1) family. As to quaternary structure, part of a tripartite efflux system composed of MdtA, MdtB and MdtC.

The protein resides in the cell inner membrane. The chain is Multidrug resistance protein MdtA from Xenorhabdus bovienii (strain SS-2004) (Xenorhabdus nematophila subsp. bovienii).